Consider the following 1843-residue polypeptide: Proteasome activator complex subunit 4 (1843 aa).

Residues methionine 1–glutamate 11 show a composition bias toward low complexity. Residues methionine 1 to glycine 25 are disordered. Residues proline 12–glycine 22 are compositionally biased toward pro residues. HEAT repeat units follow at residues proline 475–cysteine 519 and asparagine 998–glycine 1037. Phosphoserine is present on serine 1121. HEAT repeat units follow at residues arginine 1179–arginine 1217 and aspartate 1354–histidine 1392. Phosphoserine is present on serine 1614. HEAT repeat units follow at residues proline 1636–phenylalanine 1674 and glutamate 1680–leucine 1718. The segment at alanine 1650–lysine 1738 is bromodomain-like (BRDL). Position 1746 is a phosphoserine (serine 1746).

The protein belongs to the BLM10 family. As to quaternary structure, homodimer. Interacts with the 20S and 26S proteasomes. Component of the spermatoproteasome, a form of the proteasome specifically found in testis.

It is found in the cytoplasm. The protein localises to the cytosol. It localises to the nucleus. The protein resides in the nucleus speckle. Associated component of the proteasome that specifically recognizes acetylated histones and promotes ATP- and ubiquitin-independent degradation of core histones during spermatogenesis and DNA damage response. Recognizes and binds acetylated histones via its bromodomain-like (BRDL) region and activates the proteasome by opening the gated channel for substrate entry. Binds to the core proteasome via its C-terminus, which occupies the same binding sites as the proteasomal ATPases, opening the closed structure of the proteasome via an active gating mechanism. Component of the spermatoproteasome, a form of the proteasome specifically found in testis: binds to acetylated histones and promotes degradation of histones, thereby participating actively to the exchange of histones during spermatogenesis. Also involved in DNA damage response in somatic cells, by promoting degradation of histones following DNA double-strand breaks. The polypeptide is Proteasome activator complex subunit 4 (Homo sapiens (Human)).